Here is a 174-residue protein sequence, read N- to C-terminus: MDPTGIFDLPNTSLIFWEVVTFLILLALLYRYVYPIIRDQIQKRQAQIEQAIEEAEKTRAEARELLEEYRRQIEAARGEARQILDEARRQAKAQRERAREEAREEGDRIIQRAREEISRERDAALREVRREVADMVIMASSRVIGRELDAAEHERLINEALESLEAEVAGGRTA.

Residues 9–29 (LPNTSLIFWEVVTFLILLALL) form a helical membrane-spanning segment.

It belongs to the ATPase B chain family. As to quaternary structure, F-type ATPases have 2 components, F(1) - the catalytic core - and F(0) - the membrane proton channel. F(1) has five subunits: alpha(3), beta(3), gamma(1), delta(1), epsilon(1). F(0) has three main subunits: a(1), b(2) and c(10-14). The alpha and beta chains form an alternating ring which encloses part of the gamma chain. F(1) is attached to F(0) by a central stalk formed by the gamma and epsilon chains, while a peripheral stalk is formed by the delta and b chains.

It is found in the cell membrane. Its function is as follows. F(1)F(0) ATP synthase produces ATP from ADP in the presence of a proton or sodium gradient. F-type ATPases consist of two structural domains, F(1) containing the extramembraneous catalytic core and F(0) containing the membrane proton channel, linked together by a central stalk and a peripheral stalk. During catalysis, ATP synthesis in the catalytic domain of F(1) is coupled via a rotary mechanism of the central stalk subunits to proton translocation. In terms of biological role, component of the F(0) channel, it forms part of the peripheral stalk, linking F(1) to F(0). The polypeptide is ATP synthase subunit b (Rubrobacter xylanophilus (strain DSM 9941 / JCM 11954 / NBRC 16129 / PRD-1)).